Consider the following 339-residue polypeptide: Putative P2Y purinoceptor 10 (339 aa).

At 1 to 39 the chain is on the extracellular side; the sequence is MANLDKYTETFKMGSNSTSTAEIYCNVTNVKFQYSLYAT. Residues Asn16 and Asn26 are each glycosylated (N-linked (GlcNAc...) asparagine). The chain crosses the membrane as a helical span at residues 40–60; it reads TYILIFIPGLLANSAALWVLC. The Cytoplasmic segment spans residues 61 to 68; it reads RFISKKNK. Residues 69-89 traverse the membrane as a helical segment; that stretch reads AIIFMINLSVADLAHVLSLPL. Residues 90 to 103 are Extracellular-facing; the sequence is RIYYYISHHWPFQR. The helical transmembrane segment at 104–124 threads the bilayer; it reads ALCLLCFYLKYLNMYASICFL. A disulfide bond links Cys106 and Cys181. The Cytoplasmic portion of the chain corresponds to 125 to 149; sequence TCISLQRCFFLLKPFRARDWKRRYD. A helical transmembrane segment spans residues 150 to 170; the sequence is VGISAAIWIVVGTACLPFPIL. The Extracellular segment spans residues 171–193; sequence RSTDLNNNKSCFADLGYKQMNAV. Asn178 is a glycosylation site (N-linked (GlcNAc...) asparagine). A helical transmembrane segment spans residues 194 to 214; that stretch reads ALVGMITVAELAGFVIPVIII. The Cytoplasmic portion of the chain corresponds to 215–244; sequence AWCTWKTTISLRQPPMAFQGISERQKALRM. A helical transmembrane segment spans residues 245–265; sequence VFMCAAVFFICFTPYHINFIF. The Extracellular segment spans residues 266 to 288; sequence YTMVKETIISSCPVVRIALYFHP. The helical transmembrane segment at 289–309 threads the bilayer; that stretch reads FCLCLASLCCLLDPILYYFMA. At 310-339 the chain is on the cytoplasmic side; that stretch reads SEFRDQLSRHGSSVTRSRLMSKESGSSMIG.

Belongs to the G-protein coupled receptor 1 family. Weakly expressed in blood leukocytes.

Its subcellular location is the cell membrane. Putative receptor for purines coupled to G-proteins. The chain is Putative P2Y purinoceptor 10 (P2RY10) from Homo sapiens (Human).